The primary structure comprises 197 residues: TATA-box-binding protein (197 aa).

2 tandem repeats follow at residues 10-86 (IENI…VKLL) and 101-177 (IQNI…YNQL).

The protein belongs to the TBP family.

In terms of biological role, general factor that plays a role in the activation of archaeal genes transcribed by RNA polymerase. Binds specifically to the TATA box promoter element which lies close to the position of transcription initiation. The sequence is that of TATA-box-binding protein from Pyrobaculum neutrophilum (strain DSM 2338 / JCM 9278 / NBRC 100436 / V24Sta) (Thermoproteus neutrophilus).